We begin with the raw amino-acid sequence, 308 residues long: Putative mitochondrial transporter UCP3 (308 aa).

At 1-10 (MVGLKPPEVP) the chain is on the mitochondrial intermembrane side. A helical transmembrane segment spans residues 11–32 (PTTAVKLLGAGTAACFADLLTF). Solcar repeat units follow at residues 11 to 102 (PTTA…VKQL), 111 to 202 (SSIT…IKEK), and 211 to 296 (DNLP…LKRA). The Mitochondrial matrix portion of the chain corresponds to 33–73 (PLDTAKVRLQIQGENQAARSAQYRGVLGTILTMVRNEGPRS). A helical membrane pass occupies residues 74–96 (PYNGLVAGLQRQMSFASIRIGLY). The Mitochondrial intermembrane portion of the chain corresponds to 97-116 (DSVKQLYTPKGSDHSSITTR). Residues 117 to 133 (ILAGCTTGAMAVTCAQP) form a helical membrane-spanning segment. Residues 134-179 (TDVVKVRFQASIHAGPRSNRKYSGTMDAYRTIAREEGVRGLWKGIL) are Mitochondrial matrix-facing. The chain crosses the membrane as a helical span at residues 180–196 (PNITRNAIVNCAEMVTY). Residues 197–213 (DVIKEKVLDYHLLTDNL) lie on the Mitochondrial intermembrane side of the membrane. The helical transmembrane segment at 214-233 (PCHFVSAFGAGFCATVVASP) threads the bilayer. At 234-267 (VDVVKTRYMNSPPGQYQNPLDCMLKMVTQEGPTA) the chain is on the mitochondrial matrix side. A helical transmembrane segment spans residues 268–290 (FYKGFTPSFLRLGSWNVVMFVSY). The interval 275–297 (SFLRLGSWNVVMFVSYEQLKRAL) is purine nucleotide binding. Over 291-308 (EQLKRALMKVQMLRESPF) the chain is Mitochondrial intermembrane.

The protein belongs to the mitochondrial carrier (TC 2.A.29) family. Interacts with HAX1; the interaction is direct and calcium-dependent.

It localises to the mitochondrion inner membrane. Functionally, putative transmembrane transporter that plays a role in mitochondrial metabolism via an as yet unclear mechanism. Originally, this mitochondrial protein was thought to act as a proton transmembrane transporter from the mitochondrial intermembrane space into the matrix, causing proton leaks through the inner mitochondrial membrane, thereby uncoupling mitochondrial membrane potential generation from ATP synthesis. However, this function is controversial and uncoupling may not be the function, or at least not the main function, but rather a consequence of more conventional metabolite transporter activity. This chain is Putative mitochondrial transporter UCP3, found in Sus scrofa (Pig).